The following is a 358-amino-acid chain: Alanine racemase (358 aa).

The Proton acceptor; specific for D-alanine role is filled by Lys34. The residue at position 34 (Lys34) is an N6-(pyridoxal phosphate)lysine. A substrate-binding site is contributed by Arg129. Residue Tyr254 is the Proton acceptor; specific for L-alanine of the active site. Met302 contributes to the substrate binding site.

Belongs to the alanine racemase family. Pyridoxal 5'-phosphate is required as a cofactor.

The catalysed reaction is L-alanine = D-alanine. It functions in the pathway amino-acid biosynthesis; D-alanine biosynthesis; D-alanine from L-alanine: step 1/1. Its function is as follows. Catalyzes the interconversion of L-alanine and D-alanine. May also act on other amino acids. The chain is Alanine racemase (alr) from Vibrio atlanticus (strain LGP32) (Vibrio splendidus (strain Mel32)).